A 280-amino-acid chain; its full sequence is Hydroxyethylthiazole kinase (280 aa).

Residue Met50 coordinates substrate. Positions 125 and 178 each coordinate ATP. Residue Gly205 coordinates substrate.

Belongs to the Thz kinase family. Requires Mg(2+) as cofactor.

It carries out the reaction 5-(2-hydroxyethyl)-4-methylthiazole + ATP = 4-methyl-5-(2-phosphooxyethyl)-thiazole + ADP + H(+). The protein operates within cofactor biosynthesis; thiamine diphosphate biosynthesis; 4-methyl-5-(2-phosphoethyl)-thiazole from 5-(2-hydroxyethyl)-4-methylthiazole: step 1/1. In terms of biological role, catalyzes the phosphorylation of the hydroxyl group of 4-methyl-5-beta-hydroxyethylthiazole (THZ). The protein is Hydroxyethylthiazole kinase of Lacticaseibacillus casei (strain BL23) (Lactobacillus casei).